The primary structure comprises 405 residues: Insertion element IS110 uncharacterized 43.6 kDa protein (405 aa).

The polypeptide is Insertion element IS110 uncharacterized 43.6 kDa protein (Streptomyces coelicolor (strain ATCC BAA-471 / A3(2) / M145)).